Reading from the N-terminus, the 278-residue chain is MRAADALRAAVPRLAAAGIDEAARDARRLLAHAMAIDPARLTLHLPDPLPPEAAARFEAALAARAARQPVGQIVGERLFWGRRFRVTRDTLDPRPETEGLIEAALAEPFATVLDLGTGTGCIAVTLLAERPAAHGIATDLSPAALAVAAENAAALGVASRLELRLSDWFAAVPERVDLILSNPPYIAADEMAALAPEVRLWEPHLALSPGGDGLDAYRAIARGAPAHLRPGGRLLLEIGAAQGRAVAGLVEAAGLARVSVLPDLDGRDRLVSARLPAA.

Residues 116–120 (GTGTG), Asp139, Trp168, and Asn182 each bind S-adenosyl-L-methionine. 182–185 (NPPY) lines the substrate pocket.

This sequence belongs to the protein N5-glutamine methyltransferase family. PrmC subfamily.

The catalysed reaction is L-glutaminyl-[peptide chain release factor] + S-adenosyl-L-methionine = N(5)-methyl-L-glutaminyl-[peptide chain release factor] + S-adenosyl-L-homocysteine + H(+). Methylates the class 1 translation termination release factors RF1/PrfA and RF2/PrfB on the glutamine residue of the universally conserved GGQ motif. In Cereibacter sphaeroides (strain ATCC 17023 / DSM 158 / JCM 6121 / CCUG 31486 / LMG 2827 / NBRC 12203 / NCIMB 8253 / ATH 2.4.1.) (Rhodobacter sphaeroides), this protein is Release factor glutamine methyltransferase.